The following is a 281-amino-acid chain: Cytosolic Fe-S cluster assembly factor CFD1 (281 aa).

Residue 24–31 participates in ATP binding; that stretch reads GKGGVGKS. Residues C201 and C204 each coordinate [4Fe-4S] cluster.

It belongs to the Mrp/NBP35 ATP-binding proteins family. NUBP2/CFD1 subfamily. In terms of assembly, heterotetramer of 2 NBP35 and 2 CFD1 chains. The cofactor is [4Fe-4S] cluster.

It is found in the cytoplasm. Functionally, component of the cytosolic iron-sulfur (Fe/S) protein assembly (CIA) machinery. Required for maturation of extramitochondrial Fe-S proteins. The NBP35-CFD1 heterotetramer forms a Fe-S scaffold complex, mediating the de novo assembly of an Fe-S cluster and its transfer to target apoproteins. Required for biogenesis and export of both ribosomal subunits, which may reflect a role in assembly of the Fe/S clusters in RLI1, a protein which performs rRNA processing and ribosome export. This Eremothecium gossypii (strain ATCC 10895 / CBS 109.51 / FGSC 9923 / NRRL Y-1056) (Yeast) protein is Cytosolic Fe-S cluster assembly factor CFD1.